A 1377-amino-acid polypeptide reads, in one-letter code: DNA-directed RNA polymerase subunit beta'' (1377 aa).

4 residues coordinate Zn(2+): cysteine 220, cysteine 291, cysteine 298, and cysteine 301.

The protein belongs to the RNA polymerase beta' chain family. RpoC2 subfamily. As to quaternary structure, in plastids the minimal PEP RNA polymerase catalytic core is composed of four subunits: alpha, beta, beta', and beta''. When a (nuclear-encoded) sigma factor is associated with the core the holoenzyme is formed, which can initiate transcription. Requires Zn(2+) as cofactor.

Its subcellular location is the plastid. The protein resides in the chloroplast. It carries out the reaction RNA(n) + a ribonucleoside 5'-triphosphate = RNA(n+1) + diphosphate. DNA-dependent RNA polymerase catalyzes the transcription of DNA into RNA using the four ribonucleoside triphosphates as substrates. This Nandina domestica (Heavenly bamboo) protein is DNA-directed RNA polymerase subunit beta''.